The sequence spans 607 residues: Large ribosomal subunit assembly factor BipA (607 aa).

In terms of domain architecture, tr-type G spans 3-198 (EKLRNIAIIA…AIVDHVPAPD (196 aa)). GTP is bound by residues 15–20 (DHGKTT) and 128–131 (NKVD).

The protein belongs to the TRAFAC class translation factor GTPase superfamily. Classic translation factor GTPase family. BipA subfamily. Monomer.

Its subcellular location is the cytoplasm. The enzyme catalyses GTP + H2O = GDP + phosphate + H(+). Its function is as follows. A 50S ribosomal subunit assembly protein with GTPase activity, required for 50S subunit assembly at low temperatures, may also play a role in translation. Binds GTP and analogs. Binds the 70S ribosome between the 30S and 50S subunits, in a similar position as ribosome-bound EF-G; it contacts a number of ribosomal proteins, both rRNAs and the A-site tRNA. The protein is Large ribosomal subunit assembly factor BipA of Shigella flexneri.